The primary structure comprises 374 residues: Lactoyl-CoA dehydratase subunit beta (374 aa).

It belongs to the FldB/FldC dehydratase alpha/beta subunit family. In terms of assembly, heterodimer of an alpha (LcdA) and a beta (LcdB) subunit. Requires [4Fe-4S] cluster as cofactor. The cofactor is FMN. It depends on riboflavin as a cofactor. Mg(2+) serves as cofactor.

It catalyses the reaction (R)-lactoyl-CoA = acryloyl-CoA + H2O. The enzyme catalyses (2R)-hydroxybutanoyl-CoA = (2E)-butenoyl-CoA + H2O. Activated by the LcdC protein. Its function is as follows. Involved in the acrylate pathway for the conversion of D-lactic acid to propionic acid. Catalyzes the reversible dehydration of Lactoyl-CoA and 2-hydroxybutyroyl-CoA to acryloyl-CoA and crotonyl-CoA, respectively. The sequence is that of Lactoyl-CoA dehydratase subunit beta (lcdB) from Anaerotignum propionicum (Clostridium propionicum).